A 1393-amino-acid chain; its full sequence is Polarized growth protein RAX2 (1393 aa).

An N-terminal signal peptide occupies residues 1 to 21; it reads MLVQFQQLLLLLISIIKLCQA. Residues 22–1329 are Extracellular-facing; that stretch reads DDNDNSFFQP…TNKNLSRGKV (1308 aa). Residues Asn-62, Asn-85, Asn-105, Asn-125, Asn-133, Asn-139, Asn-164, Asn-186, Asn-195, Asn-212, Asn-256, Asn-260, Asn-266, Asn-269, Asn-362, Asn-398, Asn-405, Asn-479, Asn-536, Asn-542, Asn-565, Asn-599, Asn-646, Asn-649, Asn-653, Asn-674, Asn-689, Asn-696, Asn-702, Asn-714, Asn-747, Asn-764, Asn-768, Asn-792, Asn-829, Asn-863, Asn-899, Asn-935, Asn-946, Asn-958, Asn-985, Asn-1020, Asn-1030, Asn-1041, Asn-1213, Asn-1232, Asn-1262, and Asn-1323 are each glycosylated (N-linked (GlcNAc...) asparagine). A helical membrane pass occupies residues 1330 to 1350; that stretch reads VGISLACALGSTTLLGLLYII. At 1351–1393 the chain is on the cytoplasmic side; sequence PYFALFKNRKDGYFQPERIHEDEMMDAVNPEDLLHEIDLQREK.

It belongs to the RAX2 family.

It is found in the cell membrane. The protein resides in the cell tip. Its function is as follows. Required for establishing sites of emergence of yeast and hyphal daughters and for maintaining the linearity of hyphal growth, but not involved in responses that require a reorientation of the direction of already established hyphal growth (tropisms). Does not play a role in penetration or injury of human epithelial cells. The polypeptide is Polarized growth protein RAX2 (Candida albicans (strain SC5314 / ATCC MYA-2876) (Yeast)).